A 274-amino-acid polypeptide reads, in one-letter code: uncharacterized protein (274 aa).

The stretch at 99–206 (NNVISGYVDL…ESEMEIFIQK (108 aa)) forms a coiled coil.

This is an uncharacterized protein from Dictyostelium discoideum (Social amoeba).